The chain runs to 384 residues: Succinyl-diaminopimelate desuccinylase (384 aa).

His71 contributes to the Zn(2+) binding site. Residue Asp73 is part of the active site. Residue Asp104 participates in Zn(2+) binding. Glu139 acts as the Proton acceptor in catalysis. Zn(2+)-binding residues include Glu140, Glu168, and His357.

Belongs to the peptidase M20A family. DapE subfamily. In terms of assembly, homodimer. The cofactor is Zn(2+). It depends on Co(2+) as a cofactor.

It catalyses the reaction N-succinyl-(2S,6S)-2,6-diaminopimelate + H2O = (2S,6S)-2,6-diaminopimelate + succinate. The protein operates within amino-acid biosynthesis; L-lysine biosynthesis via DAP pathway; LL-2,6-diaminopimelate from (S)-tetrahydrodipicolinate (succinylase route): step 3/3. Its function is as follows. Catalyzes the hydrolysis of N-succinyl-L,L-diaminopimelic acid (SDAP), forming succinate and LL-2,6-diaminopimelate (DAP), an intermediate involved in the bacterial biosynthesis of lysine and meso-diaminopimelic acid, an essential component of bacterial cell walls. The protein is Succinyl-diaminopimelate desuccinylase of Bradyrhizobium sp. (strain ORS 278).